The chain runs to 150 residues: Ribosome maturation factor RimP (150 aa).

This sequence belongs to the RimP family.

Its subcellular location is the cytoplasm. Its function is as follows. Required for maturation of 30S ribosomal subunits. In Acaryochloris marina (strain MBIC 11017), this protein is Ribosome maturation factor RimP.